Reading from the N-terminus, the 1401-residue chain is Enhancer of mRNA-decapping protein 4 (1401 aa).

Ala2 is modified (N-acetylalanine). Residues Ser3 and Ser6 each carry the phosphoserine modification. The disordered stretch occupies residues 23–42 (DRPAGGPSAESPRPSSAYNG). WD repeat units lie at residues 121 to 164 (QPVA…VISV), 167 to 206 (SERT…VWRL), 217 to 269 (ILVH…VWDL), 287 to 326 (KQGF…FWQI), 335 to 385 (RCLH…MWCT), 389 to 426 (TCLQ…LSDV), and 432 to 475 (YVME…LRHT). Position 125 is an N6-acetyllysine (Lys125). The segment at 545 to 565 (TFGESRPELGSEGLGSAAHGS) is disordered. 4 positions are modified to phosphoserine: Ser560, Ser565, Ser583, and Ser585. 2 disordered regions span residues 603-628 (ASLQ…SSSS) and 662-702 (DGSL…QVPT). The segment covering 609 to 628 (TASPSSSSSGSSSSSSSSSS) has biased composition (low complexity). The span at 663 to 675 (GSLTMSSSGSLQA) shows a compositional bias: polar residues. Ser676 is modified (phosphoserine). Positions 677 to 689 (PRGLLPGLLPAPA) are enriched in low complexity. Position 693 is a phosphothreonine (Thr693). Ser708, Ser723, and Ser725 each carry phosphoserine. Disordered regions lie at residues 717 to 741 (LGLP…TALS) and 778 to 808 (LLSP…HNTP). Polar residues predominate over residues 722-741 (ASPSRTRSPDVISSASTALS). Phosphothreonine is present on Thr727. Phosphoserine is present on residues Ser729 and Ser741. Thr821 carries the post-translational modification Phosphothreonine. 7 positions are modified to phosphoserine: Ser844, Ser871, Ser875, Ser879, Ser887, Ser890, and Ser892. Positions 868–946 (QRDSQDASAE…RLTEHQVAEP (79 aa)) are disordered. The sufficient for nuclear localization stretch occupies residues 913 to 934 (GSPRTSPKLKRKSKKDDGDAAM). Residues 954-1025 (IWQQQRELAE…GGQLQEQLTQ (72 aa)) adopt a coiled-coil conformation. Ser967 and Ser1380 each carry phosphoserine.

This sequence belongs to the WD repeat EDC4 family. Part of a decapping complex consisting of DCP1A, DCP2, EDC3, EDC4 and probably DDX6. Part of a complex consisting of DCP1A, EDC3, EDC4 and DDX6. Part of a complex consisting of DCP1B, EDC3, EDC4 and DDX6. Interacts with DCP2. Interacts with RC3H1. Interacts with NBDY. Interacts with TEX19. Interacts with LSM14A. Interacts with DDX6. In terms of assembly, (Microbial infection) Interacts with rotavirus A non-structural protein 2; this interaction probably plays a role in the sequestration of EDC4 in viral factories. Interacts with rotavirus A non-structural protein 5; this interaction probably plays a role in its sequestration in viral factories.

Its subcellular location is the cytoplasm. It localises to the P-body. The protein resides in the nucleus. Its function is as follows. In the process of mRNA degradation, seems to play a role in mRNA decapping. Component of a complex containing DCP2 and DCP1A which functions in decapping of ARE-containing mRNAs. Promotes complex formation between DCP1A and DCP2. Enhances the catalytic activity of DCP2 (in vitro). This is Enhancer of mRNA-decapping protein 4 (EDC4) from Homo sapiens (Human).